We begin with the raw amino-acid sequence, 287 residues long: Prepilin leader peptidase/N-methyltransferase (287 aa).

A helical membrane pass occupies residues 12–32 (FMYLVVGLFSLAVGSLLNVII). Zn(2+)-binding residues include Cys71, Cys74, Cys96, and Cys99. A run of 5 helical transmembrane segments spans residues 127-147 (FTIQ…LVFI), 158-178 (LTLG…FVSL), 182-202 (VLSC…FYLM), 215-235 (LFAA…LLIS), and 259-279 (PFGP…DSII).

This sequence belongs to the peptidase A24 family. Zn(2+) is required as a cofactor.

Its subcellular location is the cell inner membrane. It catalyses the reaction Typically cleaves a -Gly-|-Phe- bond to release an N-terminal, basic peptide of 5-8 residues from type IV prepilin, and then N-methylates the new N-terminal amino group, the methyl donor being S-adenosyl-L-methionine.. Plays an essential role in type IV pili and type II pseudopili formation by proteolytically removing the leader sequence from substrate proteins and subsequently monomethylating the alpha-amino group of the newly exposed N-terminal phenylalanine. The sequence is that of Prepilin leader peptidase/N-methyltransferase (pilD) from Legionella pneumophila.